The chain runs to 325 residues: GMP reductase (325 aa).

Cysteine 173 (thioimidate intermediate) is an active-site residue. 202 to 225 (IIADGGIRDHGDIAKSVRFGASMV) is an NADP(+) binding site.

It belongs to the IMPDH/GMPR family. GuaC type 2 subfamily.

The catalysed reaction is IMP + NH4(+) + NADP(+) = GMP + NADPH + 2 H(+). Its function is as follows. Catalyzes the irreversible NADPH-dependent deamination of GMP to IMP. It functions in the conversion of nucleobase, nucleoside and nucleotide derivatives of G to A nucleotides, and in maintaining the intracellular balance of A and G nucleotides. The sequence is that of GMP reductase from Variovorax paradoxus (strain S110).